We begin with the raw amino-acid sequence, 436 residues long: Trigger factor (436 aa).

The PPIase FKBP-type domain maps to 161–246 (GDQLNIDFVG…VNSVSEAELP (86 aa)).

Belongs to the FKBP-type PPIase family. Tig subfamily.

The protein resides in the cytoplasm. It carries out the reaction [protein]-peptidylproline (omega=180) = [protein]-peptidylproline (omega=0). Functionally, involved in protein export. Acts as a chaperone by maintaining the newly synthesized protein in an open conformation. Functions as a peptidyl-prolyl cis-trans isomerase. In Azotobacter vinelandii (strain DJ / ATCC BAA-1303), this protein is Trigger factor.